Reading from the N-terminus, the 370-residue chain is Coiled-coil domain-containing protein 89 (370 aa).

Residues 1-21 (MPQEEKTLRMDTPPPDEILGK) are disordered. A Phosphothreonine modification is found at T12. Positions 36-346 (KEMDGLREAL…YDELRLQSEA (311 aa)) form a coiled coil.

Belongs to the CCDC89 family. As to quaternary structure, interacts with HEY1. As to expression, expression is restricted to the adult testis, where localization is almost exclusive to round spermatids.

It is found in the cytoplasm. The protein localises to the nucleus. The chain is Coiled-coil domain-containing protein 89 from Mus musculus (Mouse).